The following is a 783-amino-acid chain: BMP/retinoic acid-inducible neural-specific protein 2 (783 aa).

A signal peptide spans 1-33; that stretch reads MRWQCGTRFRGLRPAVAPWTALLALGLPGWVLA. The MACPF domain occupies 85 to 281; that stretch reads RYRIYREFAR…FVAAALSYIT (197 aa). N-linked (GlcNAc...) asparagine glycans are attached at residues asparagine 185, asparagine 354, asparagine 473, asparagine 579, asparagine 626, and asparagine 658.

The protein belongs to the BRINP family.

The protein resides in the secreted. Its function is as follows. Inhibits neuronal cell proliferation by negative regulation of the cell cycle transition. This Homo sapiens (Human) protein is BMP/retinoic acid-inducible neural-specific protein 2 (BRINP2).